The following is a 408-amino-acid chain: Neutral cholesterol ester hydrolase 1 (408 aa).

Over 1 to 4 the chain is Cytoplasmic; sequence MRSS. A helical; Signal-anchor for type II membrane protein membrane pass occupies residues 5–25; that stretch reads CVLLAALLALVAYYVYIPLPS. The Lumenal portion of the chain corresponds to 26 to 408; the sequence is AVSDPWKLML…SYFKWLDQNL (383 aa). The short motif at 113–115 is the Involved in the stabilization of the negatively charged intermediate by the formation of the oxyanion hole element; that stretch reads HGG. The active site involves Ser-191. N-linked (GlcNAc...) asparagine glycosylation occurs at Asn-270. Residue Asp-348 is part of the active site. An N-linked (GlcNAc...) asparagine glycan is attached at Asn-367. His-378 is an active-site residue. Asn-389 carries an N-linked (GlcNAc...) asparagine glycan.

It belongs to the 'GDXG' lipolytic enzyme family. N-glycosylated.

It is found in the cell membrane. The protein resides in the microsome. The catalysed reaction is a 1-O-alkyl-2-acetyl-sn-glycerol + H2O = a 1-O-alkyl-sn-glycerol + acetate + H(+). It catalyses the reaction 1-O-hexadecyl-2-acetyl-sn-glycerol + H2O = 1-O-hexadecyl-sn-glycerol + acetate + H(+). It carries out the reaction a cholesterol ester + H2O = cholesterol + a fatty acid + H(+). The enzyme catalyses cholesteryl (9Z-octadecenoate) + H2O = cholesterol + (9Z)-octadecenoate + H(+). Hydrolyzes 2-acetyl monoalkylglycerol ether (1-O-alkyl-2-acetyl-sn-glycerol), the penultimate precursor of the pathway for de novo synthesis of platelet-activating factor. May be responsible for the hydrolysis of cholesterol esters (such as cholesteryl (9Z-octadecenoate)) in macrophages. Also involved in organ detoxification by hydrolyzing exogenous organophosphorus compounds. This chain is Neutral cholesterol ester hydrolase 1 (Nceh1), found in Rattus norvegicus (Rat).